A 296-amino-acid polypeptide reads, in one-letter code: Formamidopyrimidine-DNA glycosylase (296 aa).

Pro2 serves as the catalytic Schiff-base intermediate with DNA. The active-site Proton donor is the Glu3. The active-site Proton donor; for beta-elimination activity is Lys58. The DNA site is built by His106, Arg125, and Lys168. The segment at 259–295 adopts an FPG-type zinc-finger fold; the sequence is RVYDRVGHACPTKGCTGRIGRIVQGGRSTFFCETCQV. Arg285 acts as the Proton donor; for delta-elimination activity in catalysis.

It belongs to the FPG family. Monomer. Zn(2+) serves as cofactor.

It carries out the reaction Hydrolysis of DNA containing ring-opened 7-methylguanine residues, releasing 2,6-diamino-4-hydroxy-5-(N-methyl)formamidopyrimidine.. It catalyses the reaction 2'-deoxyribonucleotide-(2'-deoxyribose 5'-phosphate)-2'-deoxyribonucleotide-DNA = a 3'-end 2'-deoxyribonucleotide-(2,3-dehydro-2,3-deoxyribose 5'-phosphate)-DNA + a 5'-end 5'-phospho-2'-deoxyribonucleoside-DNA + H(+). In terms of biological role, involved in base excision repair of DNA damaged by oxidation or by mutagenic agents. Acts as a DNA glycosylase that recognizes and removes damaged bases. Has a preference for oxidized purines, such as 7,8-dihydro-8-oxoguanine (8-oxoG). Has AP (apurinic/apyrimidinic) lyase activity and introduces nicks in the DNA strand. Cleaves the DNA backbone by beta-delta elimination to generate a single-strand break at the site of the removed base with both 3'- and 5'-phosphates. The protein is Formamidopyrimidine-DNA glycosylase of Methylorubrum populi (strain ATCC BAA-705 / NCIMB 13946 / BJ001) (Methylobacterium populi).